The following is a 274-amino-acid chain: Rhamnulose-1-phosphate aldolase (274 aa).

Glu117 is a catalytic residue. Zn(2+) contacts are provided by His141, His143, and His212.

This sequence belongs to the aldolase class II family. RhaD subfamily. As to quaternary structure, homotetramer. It depends on Zn(2+) as a cofactor.

It is found in the cytoplasm. The catalysed reaction is L-rhamnulose 1-phosphate = (S)-lactaldehyde + dihydroxyacetone phosphate. It participates in carbohydrate degradation; L-rhamnose degradation; glycerone phosphate from L-rhamnose: step 3/3. In terms of biological role, catalyzes the reversible cleavage of L-rhamnulose-1-phosphate to dihydroxyacetone phosphate (DHAP) and L-lactaldehyde. The protein is Rhamnulose-1-phosphate aldolase of Escherichia coli O157:H7.